We begin with the raw amino-acid sequence, 977 residues long: GAS2-like protein pickled eggs (977 aa).

Positions 20 to 159 constitute a Calponin-homology (CH) domain; the sequence is EAMREDLAEW…CLLEVARRGA (140 aa). Positions 218–245 are disordered; sequence VETDLYDDSDDSETEDDGDQNPVLMYGP. The span at 221-236 shows a compositional bias: acidic residues; the sequence is DLYDDSDDSETEDDGD. Residues 252–324 form the GAR domain; it reads NDLKSLDEMV…HYLDKHDPCR (73 aa). Disordered regions lie at residues 397 to 543, 557 to 624, 666 to 685, 693 to 803, and 910 to 977; these read PTLQ…SEIS, AQKR…VCDG, VANT…RSPL, IDNS…KGRS, and NLER…TELY. Composition is skewed to polar residues over residues 399–428 and 436–454; these read LQNG…NQQA and ATGS…QLLG. Gly residues predominate over residues 502–527; it reads GGSGVGSAAGGVSSGSAGSGVAGEQG. Polar residues predominate over residues 577 to 589; sequence RLDQTSSDSQISP. Positions 601 to 620 are enriched in acidic residues; it reads ILEEEDLNGQDREEDQEDYS. Composition is skewed to polar residues over residues 666 to 677 and 731 to 741; these read VANTMGNPTPNL and TRNSTGATTTP. Residues 928 to 953 show a composition bias toward low complexity; that stretch reads SSAASSCESNNSNAGAGSGAAAGSAS.

Belongs to the GAS2 family. As to expression, expressed in the ovary and the ring canals of the germline cells. In larvae, expressed in the notal region of the wing disk.

It is found in the cytoplasm. The protein localises to the cytoskeleton. The protein resides in the cell cortex. Its function is as follows. Essential for development and viability. Required for ovary development and oogenesis, and is essential for the development of the indirect flight muscles. May act as a negative regulator of the Notch signaling pathway in certain tissues, such as the muscle precursors and ovaries. May function as a linker protein between the actin and microtubule cytoskeletons. The polypeptide is GAS2-like protein pickled eggs (Drosophila melanogaster (Fruit fly)).